The sequence spans 631 residues: Phosphomethylpyrimidine synthase (631 aa).

Substrate contacts are provided by residues asparagine 239, methionine 268, tyrosine 297, histidine 333, 353–355, 394–397, and glutamate 433; these read SRG and DGLR. Histidine 437 provides a ligand contact to Zn(2+). Tyrosine 460 lines the substrate pocket. Histidine 501 is a Zn(2+) binding site. 3 residues coordinate [4Fe-4S] cluster: cysteine 581, cysteine 584, and cysteine 589.

Belongs to the ThiC family. Homodimer. Requires [4Fe-4S] cluster as cofactor.

It carries out the reaction 5-amino-1-(5-phospho-beta-D-ribosyl)imidazole + S-adenosyl-L-methionine = 4-amino-2-methyl-5-(phosphooxymethyl)pyrimidine + CO + 5'-deoxyadenosine + formate + L-methionine + 3 H(+). Its pathway is cofactor biosynthesis; thiamine diphosphate biosynthesis. In terms of biological role, catalyzes the synthesis of the hydroxymethylpyrimidine phosphate (HMP-P) moiety of thiamine from aminoimidazole ribotide (AIR) in a radical S-adenosyl-L-methionine (SAM)-dependent reaction. The polypeptide is Phosphomethylpyrimidine synthase (Escherichia coli O6:K15:H31 (strain 536 / UPEC)).